The primary structure comprises 202 residues: tRNA (guanine-N(7)-)-methyltransferase (202 aa).

S-adenosyl-L-methionine is bound by residues glutamate 34, glutamate 59, aspartate 86, and aspartate 107. Aspartate 107 is an active-site residue. Substrate contacts are provided by residues lysine 111, aspartate 143, and 181–184; that span reads TDYE.

Belongs to the class I-like SAM-binding methyltransferase superfamily. TrmB family.

The catalysed reaction is guanosine(46) in tRNA + S-adenosyl-L-methionine = N(7)-methylguanosine(46) in tRNA + S-adenosyl-L-homocysteine. Its pathway is tRNA modification; N(7)-methylguanine-tRNA biosynthesis. Its function is as follows. Catalyzes the formation of N(7)-methylguanine at position 46 (m7G46) in tRNA. The chain is tRNA (guanine-N(7)-)-methyltransferase from Metamycoplasma hominis (strain ATCC 23114 / DSM 25592 / NBRC 14850 / NCTC 10111 / PG21) (Mycoplasma hominis).